Reading from the N-terminus, the 451-residue chain is Porin AaxA (451 aa).

The signal sequence occupies residues Met-1 to Gly-27.

It belongs to the OprB family.

It is found in the cell outer membrane. Its function is as follows. Facilitates L-arginine uptake, as part of the AaxABC system. The arginine uptake by the bacterium in the macrophage may be a virulence factor against the host innate immune response. This is Porin AaxA (aaxA) from Chlamydia caviae (strain ATCC VR-813 / DSM 19441 / 03DC25 / GPIC) (Chlamydophila caviae).